The chain runs to 432 residues: Serine hydroxymethyltransferase (432 aa).

Residues Leu-127 and 131 to 133 contribute to the (6S)-5,6,7,8-tetrahydrofolate site; that span reads GHL. Lys-236 carries the N6-(pyridoxal phosphate)lysine modification.

This sequence belongs to the SHMT family. In terms of assembly, homodimer. The cofactor is pyridoxal 5'-phosphate.

The protein resides in the cytoplasm. It carries out the reaction (6R)-5,10-methylene-5,6,7,8-tetrahydrofolate + glycine + H2O = (6S)-5,6,7,8-tetrahydrofolate + L-serine. It participates in one-carbon metabolism; tetrahydrofolate interconversion. Its pathway is amino-acid biosynthesis; glycine biosynthesis; glycine from L-serine: step 1/1. Catalyzes the reversible interconversion of serine and glycine with tetrahydrofolate (THF) serving as the one-carbon carrier. This reaction serves as the major source of one-carbon groups required for the biosynthesis of purines, thymidylate, methionine, and other important biomolecules. Also exhibits THF-independent aldolase activity toward beta-hydroxyamino acids, producing glycine and aldehydes, via a retro-aldol mechanism. The sequence is that of Serine hydroxymethyltransferase from Rhizobium etli (strain ATCC 51251 / DSM 11541 / JCM 21823 / NBRC 15573 / CFN 42).